A 689-amino-acid polypeptide reads, in one-letter code: Elongation factor G (689 aa).

The region spanning 9–283 (AKFRNIGIMA…AIIEFMPSPL (275 aa)) is the tr-type G domain. GTP-binding positions include 18 to 25 (AHIDAGKT), 82 to 86 (DTPGH), and 136 to 139 (NKMD).

It belongs to the TRAFAC class translation factor GTPase superfamily. Classic translation factor GTPase family. EF-G/EF-2 subfamily.

It localises to the cytoplasm. Its function is as follows. Catalyzes the GTP-dependent ribosomal translocation step during translation elongation. During this step, the ribosome changes from the pre-translocational (PRE) to the post-translocational (POST) state as the newly formed A-site-bound peptidyl-tRNA and P-site-bound deacylated tRNA move to the P and E sites, respectively. Catalyzes the coordinated movement of the two tRNA molecules, the mRNA and conformational changes in the ribosome. The chain is Elongation factor G from Clostridium botulinum (strain Okra / Type B1).